A 108-amino-acid chain; its full sequence is UPF0060 membrane protein CJA_3703 (108 aa).

The next 4 helical transmembrane spans lie at 6-26 (LLFVVTALAEIIGCFLPYLWL), 31-51 (SIWLLLPAALSLALFAWLLTL), 61-81 (AAYGGVYVAVALLWLYWVDGV), and 85-105 (AYDWAGAAVALLGMAIIAMGW).

This sequence belongs to the UPF0060 family.

It is found in the cell inner membrane. The chain is UPF0060 membrane protein CJA_3703 from Cellvibrio japonicus (strain Ueda107) (Pseudomonas fluorescens subsp. cellulosa).